The chain runs to 427 residues: U1 small nuclear ribonucleoprotein 70 kDa (427 aa).

2 disordered regions span residues 82–102 (EPGDPEYAPPKPEVELPSQKR) and 215–427 (RGRT…EYVR). Positions 93–102 (PEVELPSQKR) are enriched in basic and acidic residues. An RRM domain is found at 138 to 216 (KTLFVSRLNY…RRVLVDVERG (79 aa)). The segment covering 227-241 (LGGGLGTSRVGGGEE) has biased composition (gly residues). Composition is skewed to basic and acidic residues over residues 257–402 (EPSR…RYDK) and 409–427 (RYEREYKRSKRSESREYVR). The residue at position 282 (Ser282) is a Phosphoserine.

Component of the spliceosome. Interacts with CYP63, U2AF35A, U2AF35B, SRZ21, RSZ22, SR34, SR45, SR45A and SCL33. In terms of processing, phosphorylated. The association and dissociation with SR45 is not affected by the phosphorylation status. In terms of tissue distribution, ubiquitous.

The protein resides in the nucleus speckle. It is found in the nucleus. The protein localises to the nucleoplasm. Its function is as follows. Mediates the splicing of pre-mRNA by binding to the loop I region of U1-snRNA. The sequence is that of U1 small nuclear ribonucleoprotein 70 kDa (RNU1) from Arabidopsis thaliana (Mouse-ear cress).